The primary structure comprises 183 residues: Pyruvoyl-dependent arginine decarboxylase 2 (183 aa).

Ser-41 is modified (pyruvic acid (Ser)).

The protein belongs to the PdaD family. Requires pyruvate as cofactor.

The catalysed reaction is L-arginine + H(+) = agmatine + CO2. The chain is Pyruvoyl-dependent arginine decarboxylase 2 (pdaD2) from Methanosarcina acetivorans (strain ATCC 35395 / DSM 2834 / JCM 12185 / C2A).